A 366-amino-acid chain; its full sequence is A-type ATP synthase subunit C (366 aa).

This sequence belongs to the V-ATPase V0D/AC39 subunit family. Has multiple subunits with at least A(3), B(3), C, D, E, F, H, I and proteolipid K(x).

The protein resides in the cell membrane. Functionally, component of the A-type ATP synthase that produces ATP from ADP in the presence of a proton gradient across the membrane. This is A-type ATP synthase subunit C from Thermococcus gammatolerans (strain DSM 15229 / JCM 11827 / EJ3).